The sequence spans 422 residues: 26S proteasome non-ATPase regulatory subunit 11B (422 aa).

Positions 228–392 (AYSYFFEAFE…DVLIIFEEPP (165 aa)) constitute a PCI domain.

The protein belongs to the proteasome subunit S9 family. Component of the lid subcomplex of the 19S proteasome regulatory particle complex (also named PA700 complex). The 26S proteasome consists of a 20S proteasome core and two 19S regulatory subunits.

It localises to the nucleus. Its subcellular location is the cytoplasm. The protein localises to the cytosol. Component of the lid subcomplex of the 26S proteasome, a multiprotein complex involved in the ATP-dependent degradation of ubiquitinated proteins. In the complex, psmd11b is required for proteasome assembly. This chain is 26S proteasome non-ATPase regulatory subunit 11B (psmd11b), found in Danio rerio (Zebrafish).